Here is a 593-residue protein sequence, read N- to C-terminus: Arginine--tRNA ligase (593 aa).

The 'HIGH' region signature appears at P123–H133.

Belongs to the class-I aminoacyl-tRNA synthetase family. In terms of assembly, monomer.

Its subcellular location is the cytoplasm. It catalyses the reaction tRNA(Arg) + L-arginine + ATP = L-arginyl-tRNA(Arg) + AMP + diphosphate. This chain is Arginine--tRNA ligase, found in Phenylobacterium zucineum (strain HLK1).